The sequence spans 202 residues: Nucleoside triphosphate pyrophosphatase (202 aa).

Residue aspartate 77 is the Proton acceptor of the active site.

It belongs to the Maf family. Requires a divalent metal cation as cofactor.

It is found in the cytoplasm. It carries out the reaction a ribonucleoside 5'-triphosphate + H2O = a ribonucleoside 5'-phosphate + diphosphate + H(+). The catalysed reaction is a 2'-deoxyribonucleoside 5'-triphosphate + H2O = a 2'-deoxyribonucleoside 5'-phosphate + diphosphate + H(+). Its function is as follows. Nucleoside triphosphate pyrophosphatase. May have a dual role in cell division arrest and in preventing the incorporation of modified nucleotides into cellular nucleic acids. This is Nucleoside triphosphate pyrophosphatase from Rickettsia canadensis (strain McKiel).